Consider the following 79-residue polypeptide: Small ribosomal subunit protein bS16 (79 aa).

Belongs to the bacterial ribosomal protein bS16 family.

This is Small ribosomal subunit protein bS16 from Buchnera aphidicola subsp. Acyrthosiphon pisum (strain 5A).